A 303-amino-acid polypeptide reads, in one-letter code: MTAIAQQAADRDQAQAESKAAILIESLSWLQRFHDRIVVVKFGGNAMVDEELTRTFAEDVVYLRYAGLRPVVVHGGGPQISAMLTRLGIDSEFRGGYRVTTPEVLEVVRMVLTGQVSRDVVRGINAHGPLAAAVSGEDAGLFTGRRRGAVVDGVEVDLGLVGDVVSVDPTAVLAQLDAGRIPVVSSIAPDESDPAVSLNVNADAAAAALAVALGAEKLVILTDVAGLYRDWPDRGSLVSDIRADELRALLPSLESGMIPKMAACLEAVDGGVPKAAIIDGRIPHSMLLEIFTTNGIGTEVVPA.

Substrate-binding positions include 76–77, R98, and N199; that span reads GG.

The protein belongs to the acetylglutamate kinase family. ArgB subfamily.

The protein localises to the cytoplasm. It catalyses the reaction N-acetyl-L-glutamate + ATP = N-acetyl-L-glutamyl 5-phosphate + ADP. Its pathway is amino-acid biosynthesis; L-arginine biosynthesis; N(2)-acetyl-L-ornithine from L-glutamate: step 2/4. Catalyzes the ATP-dependent phosphorylation of N-acetyl-L-glutamate. The polypeptide is Acetylglutamate kinase (Clavibacter sepedonicus (Clavibacter michiganensis subsp. sepedonicus)).